A 278-amino-acid chain; its full sequence is Toxin coregulated pilus biosynthesis protein D (278 aa).

A helical membrane pass occupies residues 30-50; the sequence is LLVAIIFLVLSILGGGAYLYY.

Its subcellular location is the cell membrane. Functionally, involved in TCP pilus biogenesis. The protein is Toxin coregulated pilus biosynthesis protein D (tcpD) of Vibrio cholerae serotype O1 (strain ATCC 39315 / El Tor Inaba N16961).